A 398-amino-acid polypeptide reads, in one-letter code: Elongation factor Tu (398 aa).

Residues Lys10–Glu207 enclose the tr-type G domain. The tract at residues Gly19–Thr26 is G1. Gly19–Thr26 is a GTP binding site. Mg(2+) is bound at residue Thr26. A G2 region spans residues Gly63–Asn67. The tract at residues Asp84–Gly87 is G3. Residues Asp84–His88 and Asn139–Asp142 contribute to the GTP site. Residues Asn139–Asp142 form a G4 region. The segment at Ser177–Leu179 is G5.

The protein belongs to the TRAFAC class translation factor GTPase superfamily. Classic translation factor GTPase family. EF-Tu/EF-1A subfamily. Monomer.

The protein localises to the cytoplasm. The enzyme catalyses GTP + H2O = GDP + phosphate + H(+). In terms of biological role, GTP hydrolase that promotes the GTP-dependent binding of aminoacyl-tRNA to the A-site of ribosomes during protein biosynthesis. This Streptococcus uberis (strain ATCC BAA-854 / 0140J) protein is Elongation factor Tu.